The sequence spans 640 residues: Chaperone protein DnaK (640 aa).

Thr199 bears the Phosphothreonine; by autocatalysis mark. The disordered stretch occupies residues 603-640; that stretch reads YTQQAEEPQPQKEEGKAAEEDVVDAEFEEVKEDKNKAS. The segment covering 611 to 621 has biased composition (basic and acidic residues); that stretch reads QPQKEEGKAAE. Acidic residues predominate over residues 622-632; the sequence is EDVVDAEFEEV.

It belongs to the heat shock protein 70 family.

Its function is as follows. Acts as a chaperone. This is Chaperone protein DnaK from Nitrosococcus oceani (strain ATCC 19707 / BCRC 17464 / JCM 30415 / NCIMB 11848 / C-107).